Reading from the N-terminus, the 719-residue chain is Phosphoribosylformylglycinamidine synthase subunit PurL (719 aa).

Histidine 47 is an active-site residue. ATP contacts are provided by tyrosine 50 and lysine 89. Residue glutamate 91 participates in Mg(2+) binding. Residues 92-95 (SHNH) and arginine 114 each bind substrate. The active-site Proton acceptor is histidine 93. Aspartate 115 serves as a coordination point for Mg(2+). Glutamine 238 provides a ligand contact to substrate. Aspartate 266 lines the Mg(2+) pocket. A substrate-binding site is contributed by 310-312 (ESQ). 2 residues coordinate ATP: aspartate 488 and glycine 525. Asparagine 526 serves as a coordination point for Mg(2+). Position 528 (serine 528) interacts with substrate.

It belongs to the FGAMS family. In terms of assembly, monomer. Part of the FGAM synthase complex composed of 1 PurL, 1 PurQ and 2 PurS subunits.

It localises to the cytoplasm. The enzyme catalyses N(2)-formyl-N(1)-(5-phospho-beta-D-ribosyl)glycinamide + L-glutamine + ATP + H2O = 2-formamido-N(1)-(5-O-phospho-beta-D-ribosyl)acetamidine + L-glutamate + ADP + phosphate + H(+). Its pathway is purine metabolism; IMP biosynthesis via de novo pathway; 5-amino-1-(5-phospho-D-ribosyl)imidazole from N(2)-formyl-N(1)-(5-phospho-D-ribosyl)glycinamide: step 1/2. Its function is as follows. Part of the phosphoribosylformylglycinamidine synthase complex involved in the purines biosynthetic pathway. Catalyzes the ATP-dependent conversion of formylglycinamide ribonucleotide (FGAR) and glutamine to yield formylglycinamidine ribonucleotide (FGAM) and glutamate. The FGAM synthase complex is composed of three subunits. PurQ produces an ammonia molecule by converting glutamine to glutamate. PurL transfers the ammonia molecule to FGAR to form FGAM in an ATP-dependent manner. PurS interacts with PurQ and PurL and is thought to assist in the transfer of the ammonia molecule from PurQ to PurL. In Ruegeria pomeroyi (strain ATCC 700808 / DSM 15171 / DSS-3) (Silicibacter pomeroyi), this protein is Phosphoribosylformylglycinamidine synthase subunit PurL.